The primary structure comprises 181 residues: Large ribosomal subunit protein uL6 (181 aa).

The protein belongs to the universal ribosomal protein uL6 family. Part of the 50S ribosomal subunit.

In terms of biological role, this protein binds to the 23S rRNA, and is important in its secondary structure. It is located near the subunit interface in the base of the L7/L12 stalk, and near the tRNA binding site of the peptidyltransferase center. The chain is Large ribosomal subunit protein uL6 from Rhodopirellula baltica (strain DSM 10527 / NCIMB 13988 / SH1).